Here is a 238-residue protein sequence, read N- to C-terminus: MKTLLVFDFDHTIINDNSDTWIVQCVPGKKLPNGLQNSYEKGKWTEYMGRVFSYLGEQGIREEDMKRIMIAIPYTPGMTDLLHFIGQNKDSFDCIIISDSNTIFIDWILTHANVHNVFDKVFTNPAAFDSVGNLTVQNFHVHHCTTCPTNLCKKKVLEEFVAKQSSNSAHYSKIVYVGDGGNDLCPVTFLKKGDIAMPRAGYTLDKHIAKDVTLVDSTISVWSTGAEILSHLKLLLEH.

Asp-8 serves as the catalytic Nucleophile. Residues Asp-8 and Asp-10 each contribute to the Mg(2+) site. The active-site Proton donor is the Asp-10. Substrate contacts are provided by Asp-19 and Asp-99. Asp-179 is a binding site for Mg(2+).

It belongs to the HAD-like hydrolase superfamily. PHOSPHO family. The cofactor is Mg(2+).

Its function is as follows. Probable phosphatase. The protein is Probable phosphatase phospho2 (phospho2) of Xenopus tropicalis (Western clawed frog).